The following is a 267-amino-acid chain: Tryptophan synthase alpha chain (267 aa).

Residues glutamate 43 and aspartate 54 each act as proton acceptor in the active site.

This sequence belongs to the TrpA family. Tetramer of two alpha and two beta chains.

The enzyme catalyses (1S,2R)-1-C-(indol-3-yl)glycerol 3-phosphate + L-serine = D-glyceraldehyde 3-phosphate + L-tryptophan + H2O. It participates in amino-acid biosynthesis; L-tryptophan biosynthesis; L-tryptophan from chorismate: step 5/5. The alpha subunit is responsible for the aldol cleavage of indoleglycerol phosphate to indole and glyceraldehyde 3-phosphate. The sequence is that of Tryptophan synthase alpha chain from Bacillus licheniformis (strain ATCC 14580 / DSM 13 / JCM 2505 / CCUG 7422 / NBRC 12200 / NCIMB 9375 / NCTC 10341 / NRRL NRS-1264 / Gibson 46).